A 271-amino-acid polypeptide reads, in one-letter code: Thioredoxin-related transmembrane protein 2 homolog (271 aa).

The first 28 residues, 1-28, serve as a signal peptide directing secretion; it reads MTWKKQMALLAKPYYWVNILLAISYLLA. The Extracellular segment spans residues 29–102; it reads KKTQFICTRL…AILWAYADFR (74 aa). Residues 103 to 123 form a helical membrane-spanning segment; it reads YGLGFLLLCVLVGMVLPEPSY. In terms of domain architecture, Thioredoxin spans 112–262; the sequence is VLVGMVLPEP…YKEAIERLPI (151 aa). Residues 124–271 are Cytoplasmic-facing; it reads RGPEHITYFR…IAPKEAKKVQ (148 aa). The Di-lysine motif signature appears at 268 to 271; sequence KKVQ.

It is found in the membrane. This chain is Thioredoxin-related transmembrane protein 2 homolog, found in Drosophila melanogaster (Fruit fly).